Reading from the N-terminus, the 578-residue chain is Probable cytochrome c oxidase subunit 1-alpha (578 aa).

A disordered region spans residues 1–21 (MSILNEPQGASAAEDSYENEL). Residues 44 to 64 (IGTMYLVTSFAFFVIGGVMAL) form a helical membrane-spanning segment. Residue His-90 coordinates Fe(II)-heme a. Transmembrane regions (helical) follow at residues 93–113 (IMLL…IMPL), 125–145 (LNMF…GGFL), 174–194 (LWIM…VNFI), 217–237 (VLLT…ALFA), 262–282 (LFWF…FGIV), and 294–314 (IFGY…SVTV). Cu cation-binding residues include His-268 and Tyr-272. Residues 268–272 (HPEVY) constitute a cross-link (1'-histidyl-3'-tyrosine (His-Tyr)). Cu cation is bound by residues His-317 and His-318. 2 helical membrane passes run 319–339 (MYVT…LIAV) and 363–383 (MLWS…GVIL). His-401 provides a ligand contact to heme a3. A run of 3 helical transmembrane segments spans residues 402–422 (FHYV…HFWW), 437–457 (ITFW…HWLG), and 480–500 (ISTI…YNIW). His-403 contacts Fe(II)-heme a.

Belongs to the heme-copper respiratory oxidase family. As to quaternary structure, associates with subunits II, III and IV to form cytochrome c oxidase. Cu(2+) serves as cofactor. The cofactor is heme.

The protein resides in the cell membrane. It carries out the reaction 4 Fe(II)-[cytochrome c] + O2 + 8 H(+)(in) = 4 Fe(III)-[cytochrome c] + 2 H2O + 4 H(+)(out). It participates in energy metabolism; oxidative phosphorylation. Cytochrome c oxidase is the component of the respiratory chain that catalyzes the reduction of oxygen to water. Subunits 1-3 form the functional core of the enzyme complex. CO I is the catalytic subunit of the enzyme. Electrons originating in cytochrome c are transferred via the copper A center of subunit 2 and heme A of subunit 1 to the bimetallic center formed by heme A3 and copper B. This Streptomyces coelicolor (strain ATCC BAA-471 / A3(2) / M145) protein is Probable cytochrome c oxidase subunit 1-alpha (ctaD1).